Consider the following 117-residue polypeptide: uncharacterized protein (117 aa).

A helical transmembrane segment spans residues 57–77; that stretch reads LGFPLGLLVFLHSLIVARFFV.

The protein resides in the membrane. This is an uncharacterized protein from Schizosaccharomyces pombe (strain 972 / ATCC 24843) (Fission yeast).